The chain runs to 361 residues: MSTPRKAAGNNENTEVSEIRTPFRERALEEQRLKDEVLIRNTPGYRKLLSASTKSHDILNKDPNEVRSFLQDLSQVLARKSQGNDTTTNKTQARNLIDELAYEESQPEENELLRSRSEKLTDNNIGNETQPDYTSLSQTVFAKLQERDKGLKSRKIDPIIIQDVPTTGHEDELTVHSPDKANSISMEVLRTSPSIGMDQVDEPPVRDPVPISITQQEEPLSEDLPSDDKEETEEAENEDYSFENTSDENLDDIGNDPIRLNVPAVRRSSIKPLQIMDLKHLTRQFLNENRIILPKQTWSTIQEESLNIMDFLKQKIGTLQKQELVDSFIDMGIINNVDDMFELAHELLPLELQSRIESYLF.

Residues 1–22 (MSTPRKAAGNNENTEVSEIRTP) are disordered. Phosphoserine; by CDK1 is present on S2. T14 bears the Phosphothreonine; by CDK1 and MPS1 mark. S17 bears the Phosphoserine; by CDK1 and MPS1 mark. 2 positions are modified to phosphothreonine; by CDK1: T21 and T42. S50 carries the post-translational modification Phosphoserine; by CDK1 and MPS1. A Phosphoserine; by CDK1 modification is found at S52. T53 bears the Phosphothreonine; by MPS1 mark. S55 carries the phosphoserine; by CDK1 modification. The segment at 60–84 (NKDPNEVRSFLQDLSQVLARKSQGN) is interacts with the NDC80 complex subunits SPC24 and SPC25 and with the KNL1 complex. Phosphoserine; by CDK1 and MPS1 is present on S74. Residues T86 and T88 each carry the phosphothreonine; by MPS1 modification. T91 is modified (phosphothreonine; by CDK1 and MPS1). Positions 103–132 (EESQPEENELLRSRSEKLTDNNIGNETQPD) are disordered. Over residues 111–121 (ELLRSRSEKLT) the composition is skewed to basic and acidic residues. The residue at position 115 (S115) is a Phosphoserine; by CDK1. A compositionally biased stretch (polar residues) spans 122–132 (DNNIGNETQPD). Phosphothreonine; by CDK1 and MPS1 is present on T129. T134 carries the post-translational modification Phosphothreonine; by MPS1. Residue S135 is modified to Phosphoserine; by MPS1. T139 is modified (phosphothreonine; by CDK1 and MPS1). Position 153 is a phosphoserine; by MPS1 (S153). Residue T174 is modified to Phosphothreonine; by MPS1. Position 177 is a phosphoserine; by CDK1 (S177). T191 is subject to Phosphothreonine; by CDK1. Residue S192 is modified to Phosphoserine; by CDK1. The tract at residues 193–255 (PSIGMDQVDE…SDENLDDIGN (63 aa)) is disordered. Residues 219–254 (PLSEDLPSDDKEETEEAENEDYSFENTSDENLDDIG) are compositionally biased toward acidic residues. Residue S268 is modified to Phosphoserine; by CDK1. S269 is modified (phosphoserine; by MPS1 and IPL1).

The protein belongs to the CENP-T/CNN1 family. Component of the inner kinetochore constitutive centromere-associated network (CCAN) (also known as central kinetochore CTF19 complex in yeast), which is composed of at least AME1, CHL4, CNN1, CTF3, CTF19, IML3, MCM16, MCM21, MCM22, MHF1, MHF2, MIF2, NKP1, NKP2, OKP1 and WIP1. Interacts (via N-terminus) with the outer kinetochore NDC80 complex subunits SPC24 (via C-terminus) and SPC25 (via C-terminus); the interaction is direct and contributes to the correct spatiotemporal organization of the KMN network. Interacts with outer kinetochore MIS12 complex subunit NNF1. Interacts (via N-terminus) with the KNL1 complex. Phosphorylation of the C-terminus by MPS1 kinase regulates interaction with the outer kinetochore Ndc80 complex. Phosphorylation levels rise from S-phase and through metaphase, the protein is thendephosphorylated in anaphase.

The protein resides in the nucleus. Its subcellular location is the chromosome. It is found in the centromere. The protein localises to the kinetochore. Functionally, component of the kinetochore, a multiprotein complex that assembles on centromeric DNA and attaches chromosomes to spindle microtubules, mediating chromosome segregation and sister chromatid segregation during meiosis and mitosis. Component of the inner kinetochore constitutive centromere-associated network (CCAN), which serves as a structural platform for outer kinetochore assembly. Modulates outer kinetochore KMN network activity by regulating interactions within the network. In Saccharomyces cerevisiae (strain ATCC 204508 / S288c) (Baker's yeast), this protein is Inner kinetochore subunit CNN1 (CNN1).